Reading from the N-terminus, the 545-residue chain is CTP synthase (545 aa).

The tract at residues methionine 1–leucine 266 is amidoligase domain. A CTP-binding site is contributed by serine 14. Serine 14 contacts UTP. ATP contacts are provided by residues serine 15 to isoleucine 20 and aspartate 72. Residues aspartate 72 and glutamate 140 each coordinate Mg(2+). Residues aspartate 147–glutamate 149, lysine 187–glutamine 192, and lysine 223 each bind CTP. UTP is bound by residues lysine 187–glutamine 192 and lysine 223. Lysine 239–valine 241 contacts ATP. The Glutamine amidotransferase type-1 domain maps to threonine 291 to arginine 542. Glycine 352 serves as a coordination point for L-glutamine. Cysteine 379 (nucleophile; for glutamine hydrolysis) is an active-site residue. L-glutamine is bound by residues leucine 380–glutamine 383, glutamate 403, and arginine 470. Catalysis depends on residues histidine 515 and glutamate 517.

It belongs to the CTP synthase family. As to quaternary structure, homotetramer.

It catalyses the reaction UTP + L-glutamine + ATP + H2O = CTP + L-glutamate + ADP + phosphate + 2 H(+). The enzyme catalyses L-glutamine + H2O = L-glutamate + NH4(+). The catalysed reaction is UTP + NH4(+) + ATP = CTP + ADP + phosphate + 2 H(+). It participates in pyrimidine metabolism; CTP biosynthesis via de novo pathway; CTP from UDP: step 2/2. With respect to regulation, allosterically activated by GTP, when glutamine is the substrate; GTP has no effect on the reaction when ammonia is the substrate. The allosteric effector GTP functions by stabilizing the protein conformation that binds the tetrahedral intermediate(s) formed during glutamine hydrolysis. Inhibited by the product CTP, via allosteric rather than competitive inhibition. Catalyzes the ATP-dependent amination of UTP to CTP with either L-glutamine or ammonia as the source of nitrogen. Regulates intracellular CTP levels through interactions with the four ribonucleotide triphosphates. The sequence is that of CTP synthase from Salmonella paratyphi A (strain ATCC 9150 / SARB42).